Consider the following 325-residue polypeptide: Glutarate 2-hydroxylase (325 aa).

Positions 160, 162, and 292 each coordinate Fe cation.

Belongs to the glutarate hydroxylase family. Homotetramer. The cofactor is Fe(2+).

It carries out the reaction glutarate + 2-oxoglutarate + O2 = (S)-2-hydroxyglutarate + succinate + CO2. It functions in the pathway amino-acid degradation. In terms of biological role, acts as an alpha-ketoglutarate-dependent dioxygenase catalyzing hydroxylation of glutarate (GA) to L-2-hydroxyglutarate (L2HG). Functions in a L-lysine degradation pathway that proceeds via cadaverine, glutarate and L-2-hydroxyglutarate. This chain is Glutarate 2-hydroxylase, found in Escherichia coli (strain K12 / MC4100 / BW2952).